Consider the following 317-residue polypeptide: Methionyl-tRNA formyltransferase (317 aa).

Ser-117–Pro-120 lines the (6S)-5,6,7,8-tetrahydrofolate pocket.

This sequence belongs to the Fmt family.

The enzyme catalyses L-methionyl-tRNA(fMet) + (6R)-10-formyltetrahydrofolate = N-formyl-L-methionyl-tRNA(fMet) + (6S)-5,6,7,8-tetrahydrofolate + H(+). Functionally, attaches a formyl group to the free amino group of methionyl-tRNA(fMet). The formyl group appears to play a dual role in the initiator identity of N-formylmethionyl-tRNA by promoting its recognition by IF2 and preventing the misappropriation of this tRNA by the elongation apparatus. The chain is Methionyl-tRNA formyltransferase from Herminiimonas arsenicoxydans.